A 185-amino-acid chain; its full sequence is MLNEIFNKQKTQSEKSLEALKKDFTTLRTGKINTHILDHITVDYYGNQTPLNQVATVLASDASTISITPWEKPLLKTIESAIAAANIGVNPNNDGESVKLFFPPMTREQREENVKQAKAMGEKAKVSIRNIRKDANDAVKKLEKDKAISEDEAKKAYDEVQKLTDVYTTKIDESVKSKESELLKV.

The protein belongs to the RRF family.

The protein resides in the cytoplasm. In terms of biological role, responsible for the release of ribosomes from messenger RNA at the termination of protein biosynthesis. May increase the efficiency of translation by recycling ribosomes from one round of translation to another. This Campylobacter jejuni subsp. doylei (strain ATCC BAA-1458 / RM4099 / 269.97) protein is Ribosome-recycling factor.